We begin with the raw amino-acid sequence, 692 residues long: DNA ligase (692 aa).

Residues 35 to 39 (DLVYD), 88 to 89 (SL), and Glu-117 each bind NAD(+). Catalysis depends on Lys-119, which acts as the N6-AMP-lysine intermediate. NAD(+)-binding residues include Arg-140, Glu-176, Lys-301, and Lys-325. Cys-416, Cys-419, Cys-434, and Cys-439 together coordinate Zn(2+). Positions 611 to 692 (LTNQSNSWAS…FDLIKNSKKT (82 aa)) constitute a BRCT domain.

The protein belongs to the NAD-dependent DNA ligase family. LigA subfamily. Mg(2+) is required as a cofactor. Mn(2+) serves as cofactor.

It carries out the reaction NAD(+) + (deoxyribonucleotide)n-3'-hydroxyl + 5'-phospho-(deoxyribonucleotide)m = (deoxyribonucleotide)n+m + AMP + beta-nicotinamide D-nucleotide.. Its function is as follows. DNA ligase that catalyzes the formation of phosphodiester linkages between 5'-phosphoryl and 3'-hydroxyl groups in double-stranded DNA using NAD as a coenzyme and as the energy source for the reaction. It is essential for DNA replication and repair of damaged DNA. The protein is DNA ligase of Mesomycoplasma hyopneumoniae (strain 7448) (Mycoplasma hyopneumoniae).